A 535-amino-acid chain; its full sequence is EH domain-containing protein 3 (535 aa).

The residue at position 1 (Met-1) is an N-acetylmethionine. A Dynamin-type G domain is found at 55–286 (FDNKPMVLLV…DLFRDIQSLP (232 aa)). Residues 65 to 72 (GQYSTGKT) are G1 motif. Residue 65–72 (GQYSTGKT) participates in ATP binding. Residues 91–92 (EP) form a G2 motif region. The segment at 153 to 156 (DTPG) is G3 motif. Residues 198 to 227 (DEFSEVIKALKNHEDKMRVVLNKADQIETQ) adopt a coiled-coil conformation. A G4 motif region spans residues 219–222 (NKAD). Lys-220 contacts ATP. Ile-243 is a region of interest (G5 motif). Residue Trp-258 coordinates ATP. Residue Lys-315 forms a Glycyl lysine isopeptide (Lys-Gly) (interchain with G-Cter in SUMO) linkage. Ser-349 and Ser-456 each carry phosphoserine. Residues 444–532 (DKPMYDEIFY…AHLLPPSKRK (89 aa)) form the EH domain. The EF-hand domain maps to 476 to 511 (LPNSVLGKIWKLADIDKDGMLDDDEFALANHLIKVK). Asp-489, Asp-491, Asp-493, Met-495, and Glu-500 together coordinate Ca(2+). Lys-511 is covalently cross-linked (Glycyl lysine isopeptide (Lys-Gly) (interchain with G-Cter in SUMO)).

Belongs to the TRAFAC class dynamin-like GTPase superfamily. Dynamin/Fzo/YdjA family. EHD subfamily. In terms of assembly, homooligomer, and heterooligomer with EHD1, EHD2 and EHD4, ATP-binding is required for heterooligomerization. Interacts with PACSIN1. Interacts with PACSIN2. Interacts (via EH domain) with MICALL1. Interacts (via EH domain) with RAB11FIP2. Interacts with ANK2. In terms of tissue distribution, highly expressed in heart and brain and moderately expressed in kidney, liver, and placenta.

It localises to the recycling endosome membrane. It is found in the cell membrane. The protein localises to the cell projection. The protein resides in the cilium membrane. In terms of biological role, ATP- and membrane-binding protein that controls membrane reorganization/tubulation upon ATP hydrolysis. In vitro causes tubulation of endocytic membranes. Binding to phosphatidic acid induces its membrane tubulation activity. Plays a role in endocytic transport. Involved in early endosome to recycling endosome compartment (ERC), retrograde early endosome to Golgi, and endosome to plasma membrane (rapid recycling) protein transport. Involved in the regulation of Golgi maintenance and morphology. Involved in the recycling of internalized D1 dopamine receptor. Plays a role in cardiac protein trafficking probably implicating ANK2. Involved in the ventricular membrane targeting of SLC8A1 and CACNA1C and probably the atrial membrane localization of CACNA1GG and CACNA1H implicated in the regulation of atrial myocyte excitability and cardiac conduction. In conjunction with EHD4 may be involved in endocytic trafficking of KDR/VEGFR2 implicated in control of glomerular function. Involved in the rapid recycling of integrin beta-3 implicated in cell adhesion maintenance. Involved in the unidirectional retrograde dendritic transport of endocytosed BACE1 and in efficient sorting of BACE1 to axons implicating a function in neuronal APP processing. Plays a role in the formation of the ciliary vesicle, an early step in cilium biogenesis; possibly sharing redundant functions with EHD1. This Homo sapiens (Human) protein is EH domain-containing protein 3.